Reading from the N-terminus, the 2316-residue chain is Receptor-type tyrosine-protein phosphatase zeta (2316 aa).

Residues 1-24 (MRILQSFLACVQLLCVCRLDWAYG) form the signal peptide. Residues 25 to 1637 (YYRQQRKLVE…LAEGLESEKK (1613 aa)) lie on the Extracellular side of the membrane. Residues 36–300 (IGWSYTGALN…KFSRQVFSSY (265 aa)) form the Alpha-carbonic anhydrase domain. Intrachain disulfides connect Cys56/Cys240 and Cys133/Cys264. N-linked (GlcNAc...) asparagine glycosylation is found at Asn105, Asn134, Asn223, Asn232, Asn324, Asn381, and Asn497. Residues 314–413 (EPENVQADPE…LIVDMPTEDA (100 aa)) form the Fibronectin type-III domain. Disordered stretches follow at residues 433–499 (YGKG…LNTS) and 518–537 (LPSQ…TSAS). Asn552 carries an N-linked (GlcNAc...) asparagine glycan. A phosphoserine mark is found at Ser572 and Ser576. Disordered stretches follow at residues 586 to 624 (KLDS…TPEA) and 636 to 720 (RNAL…EMPH). A compositionally biased stretch (low complexity) spans 592 to 602 (DDSSGSSPASS). An O-linked (Xyl...) (chondroitin sulfate) serine glycan is attached at Ser595. Residues 603 to 621 (TVPFSTDNLSHGYTSSSDT) show a composition bias toward polar residues. Asn610 carries N-linked (GlcNAc...) asparagine glycosylation. Ser645 carries the post-translational modification Phosphoserine; alternate. Residue Ser645 is glycosylated (O-linked (Xyl...) (chondroitin sulfate) serine; alternate). Ser647 carries the phosphoserine modification. The span at 666-675 (TDLTTQSETG) shows a compositional bias: polar residues. The N-linked (GlcNAc...) asparagine glycan is linked to Asn685. The segment covering 699-711 (ETFSPDATASRGP) has biased composition (polar residues). N-linked (GlcNAc...) asparagine glycosylation occurs at Asn786. The O-linked (Xyl...) (chondroitin sulfate) serine glycan is linked to Ser1005. 2 N-linked (GlcNAc...) asparagine glycosylation sites follow: Asn1025 and Asn1058. Disordered stretches follow at residues 1141 to 1172 (QASG…SHPS), 1204 to 1228 (KTAL…SSSS), 1401 to 1521 (LLPS…DGRE), and 1545 to 1622 (TSDE…NSSH). Positions 1152–1172 (LSTNSEPALSDTASSEVSHPS) are enriched in polar residues. The span at 1401-1413 (LLPSKATSKPTHS) shows a compositional bias: polar residues. Residues 1425–1439 (EDGDDYDDDDYDDID) show a composition bias toward acidic residues. A glycan (N-linked (GlcNAc...) asparagine) is linked at Asn1463. The segment covering 1464-1478 (DSDTQESSLVDQSDP) has biased composition (polar residues). 2 O-linked (Xyl...) (chondroitin sulfate) serine glycosylation sites follow: Ser1550 and Ser1552. 2 stretches are compositionally biased toward polar residues: residues 1555–1569 (GTSD…STDF) and 1595–1609 (PRSS…HSGV). A glycan (N-linked (GlcNAc...) asparagine) is linked at Asn1563. Residues 1610-1621 (SNSSEAEASNSS) are compositionally biased toward low complexity. N-linked (GlcNAc...) asparagine glycans are attached at residues Asn1611 and Asn1619. The helical transmembrane segment at 1638-1663 (AVIPLVIVSALTFICLVVLVGILIYW) threads the bilayer. Residues 1664-2316 (RKCFQTAHFY…NIAESLESLV (653 aa)) lie on the Cytoplasmic side of the membrane. Residues Thr1685 and Thr1688 each carry the phosphothreonine modification. 2 Tyrosine-protein phosphatase domains span residues 1718 to 1993 (FTEE…LVEA) and 2024 to 2283 (LEKQ…VLSL). Substrate is bound by residues Asp1902, 1934–1940 (CSAGVGR), and Gln1978. The active-site Phosphocysteine intermediate is Cys1934. The residue at position 2056 (Ser2056) is a Phosphoserine.

This sequence belongs to the protein-tyrosine phosphatase family. Receptor class 5 subfamily. Interacts with tenascin. Interacts with N-CAM and NG-CAM. The carbonic-anhydrase like domain interacts with CNTN1 (contactin). Interacts with PTN. Interaction with PTN promotes formation of homooligomers; oligomerization impairs phosphatase activity. Interacts (via chondroitin sulfate chains) with MDK (via C-terminal); this interaction is inhibited by PTN; this interaction promotes neuronal migration. In terms of tissue distribution, nervous tissue specific.

The protein resides in the cell membrane. Its subcellular location is the secreted. The enzyme catalyses O-phospho-L-tyrosyl-[protein] + H2O = L-tyrosyl-[protein] + phosphate. Protein tyrosine phosphatase that negatively regulates oligodendrocyte precursor proliferation in the embryonic spinal cord. Required for normal differentiation of the precursor cells into mature, fully myelinating oligodendrocytes. May play a role in protecting oligondendrocytes against apoptosis. May play a role in the establishment of contextual memory, probably via the dephosphorylation of proteins that are part of important signaling cascades. Functionally, isoform 3 (phosphacan), previously designated 3F8 chondroitin sulfate proteoglycan or 3H1 keratan sulfate proteoglycan depending on the glycosylation status, is a soluble nervous tissue-specific proteoglycan. It is synthesized by glia and binds to neurons and to the neural cell adhesion molecules tenascin, N-CAM or NG-CAM but not to laminin and fibronectin. Phosphacan acts as a potent inhibitor of cell adhesion and neurite outgrowth. The sequence is that of Receptor-type tyrosine-protein phosphatase zeta (Ptprz1) from Rattus norvegicus (Rat).